Here is a 227-residue protein sequence, read N- to C-terminus: NDR1/HIN1-like protein 10 (227 aa).

Residues Val42 to Ile62 traverse the membrane as a helical segment. N-linked (GlcNAc...) asparagine glycans are attached at residues Asn138 and Asn210.

In terms of tissue distribution, expressed in senescing leaves.

The protein localises to the cell membrane. Its function is as follows. May play a role in plant immunity. The chain is NDR1/HIN1-like protein 10 from Arabidopsis thaliana (Mouse-ear cress).